Here is a 255-residue protein sequence, read N- to C-terminus: 4-diphosphocytidyl-2-C-methyl-D-erythritol kinase (255 aa).

Lys-6 is an active-site residue. 95–105 (PVCAGLGGGSS) provides a ligand contact to ATP. Asp-137 is an active-site residue.

It belongs to the GHMP kinase family. IspE subfamily.

The catalysed reaction is 4-CDP-2-C-methyl-D-erythritol + ATP = 4-CDP-2-C-methyl-D-erythritol 2-phosphate + ADP + H(+). Its pathway is isoprenoid biosynthesis; isopentenyl diphosphate biosynthesis via DXP pathway; isopentenyl diphosphate from 1-deoxy-D-xylulose 5-phosphate: step 3/6. Catalyzes the phosphorylation of the position 2 hydroxy group of 4-diphosphocytidyl-2C-methyl-D-erythritol. This is 4-diphosphocytidyl-2-C-methyl-D-erythritol kinase from Campylobacter jejuni subsp. doylei (strain ATCC BAA-1458 / RM4099 / 269.97).